A 333-amino-acid chain; its full sequence is Holliday junction branch migration complex subunit RuvB (333 aa).

The interval 1 to 182 is large ATPase domain (RuvB-L); sequence MDERLVSGSA…FGVISRLEYY (182 aa). Residues L21, R22, G63, K66, T67, T68, 129-131, R172, Y182, and R219 contribute to the ATP site; that span reads EDY. Position 67 (T67) interacts with Mg(2+). The interval 183–253 is small ATPAse domain (RuvB-S); the sequence is QVDQLAQIIE…LAVEALERLQ (71 aa). The tract at residues 256-333 is head domain (RuvB-H); the sequence is RLGLDHIDHK…AHLGMEVPKR (78 aa). DNA is bound by residues R311 and R316.

Belongs to the RuvB family. As to quaternary structure, homohexamer. Forms an RuvA(8)-RuvB(12)-Holliday junction (HJ) complex. HJ DNA is sandwiched between 2 RuvA tetramers; dsDNA enters through RuvA and exits via RuvB. An RuvB hexamer assembles on each DNA strand where it exits the tetramer. Each RuvB hexamer is contacted by two RuvA subunits (via domain III) on 2 adjacent RuvB subunits; this complex drives branch migration. In the full resolvosome a probable DNA-RuvA(4)-RuvB(12)-RuvC(2) complex forms which resolves the HJ.

It is found in the cytoplasm. It catalyses the reaction ATP + H2O = ADP + phosphate + H(+). Functionally, the RuvA-RuvB-RuvC complex processes Holliday junction (HJ) DNA during genetic recombination and DNA repair, while the RuvA-RuvB complex plays an important role in the rescue of blocked DNA replication forks via replication fork reversal (RFR). RuvA specifically binds to HJ cruciform DNA, conferring on it an open structure. The RuvB hexamer acts as an ATP-dependent pump, pulling dsDNA into and through the RuvAB complex. RuvB forms 2 homohexamers on either side of HJ DNA bound by 1 or 2 RuvA tetramers; 4 subunits per hexamer contact DNA at a time. Coordinated motions by a converter formed by DNA-disengaged RuvB subunits stimulates ATP hydrolysis and nucleotide exchange. Immobilization of the converter enables RuvB to convert the ATP-contained energy into a lever motion, pulling 2 nucleotides of DNA out of the RuvA tetramer per ATP hydrolyzed, thus driving DNA branch migration. The RuvB motors rotate together with the DNA substrate, which together with the progressing nucleotide cycle form the mechanistic basis for DNA recombination by continuous HJ branch migration. Branch migration allows RuvC to scan DNA until it finds its consensus sequence, where it cleaves and resolves cruciform DNA. The polypeptide is Holliday junction branch migration complex subunit RuvB (Geobacillus thermodenitrificans (strain NG80-2)).